Reading from the N-terminus, the 187-residue chain is Probable chorismate pyruvate-lyase (187 aa).

Residues Arg-77, Leu-115, and Glu-174 each contribute to the substrate site.

It belongs to the UbiC family.

The protein localises to the cytoplasm. The enzyme catalyses chorismate = 4-hydroxybenzoate + pyruvate. It functions in the pathway cofactor biosynthesis; ubiquinone biosynthesis. Its function is as follows. Removes the pyruvyl group from chorismate, with concomitant aromatization of the ring, to provide 4-hydroxybenzoate (4HB) for the ubiquinone pathway. The chain is Probable chorismate pyruvate-lyase from Shewanella sp. (strain ANA-3).